The chain runs to 312 residues: ADP-L-glycero-D-manno-heptose-6-epimerase (312 aa).

Residues Phe10–Ile11, Asp31–Asn32, Lys38, Lys53, Glu75–Ser79, and Asn92 contribute to the NADP(+) site. Tyr140 functions as the Proton acceptor in the catalytic mechanism. Lys144 provides a ligand contact to NADP(+). Asn169 contacts substrate. The NADP(+) site is built by Val170 and Lys178. The active-site Proton acceptor is the Lys178. Residues Ser180, His187, Phe201–Ser204, Arg209, and Tyr274 contribute to the substrate site.

It belongs to the NAD(P)-dependent epimerase/dehydratase family. HldD subfamily. In terms of assembly, homopentamer. NADP(+) serves as cofactor.

The enzyme catalyses ADP-D-glycero-beta-D-manno-heptose = ADP-L-glycero-beta-D-manno-heptose. Its pathway is nucleotide-sugar biosynthesis; ADP-L-glycero-beta-D-manno-heptose biosynthesis; ADP-L-glycero-beta-D-manno-heptose from D-glycero-beta-D-manno-heptose 7-phosphate: step 4/4. Its function is as follows. Catalyzes the interconversion between ADP-D-glycero-beta-D-manno-heptose and ADP-L-glycero-beta-D-manno-heptose via an epimerization at carbon 6 of the heptose. This Proteus mirabilis (strain HI4320) protein is ADP-L-glycero-D-manno-heptose-6-epimerase.